A 371-amino-acid polypeptide reads, in one-letter code: GDSL esterase/lipase At3g27950 (371 aa).

The N-terminal stretch at 1–23 is a signal peptide; it reads MAISKITLAIIVLLLGFTEKLSA. S39 acts as the Nucleophile in catalysis. N-linked (GlcNAc...) asparagine glycosylation is found at N82, N143, N178, N194, and N315. Active-site residues include D334 and H337.

This sequence belongs to the 'GDSL' lipolytic enzyme family.

Its subcellular location is the secreted. This is GDSL esterase/lipase At3g27950 from Arabidopsis thaliana (Mouse-ear cress).